Consider the following 1434-residue polypeptide: Receptor-type tyrosine-protein phosphatase U (1434 aa).

Positions 1–17 are cleaved as a signal peptide; that stretch reads MRSARALLLALALRVCA. Over 18 to 748 the chain is Extracellular; the sequence is LDSETPSAGC…QHSEEMGLIL (731 aa). One can recognise an MAM domain in the interval 25–187; the sequence is AGCTFEEDDD…ILLLNYPCSK (163 aa). An N-linked (GlcNAc...) asparagine glycan is attached at Asn-74. One can recognise an Ig-like C2-type domain in the interval 189–274; that stretch reads PHFSRLGDVE…TQSSRGSGVS (86 aa). A disulfide bridge links Cys-209 with Cys-263. Fibronectin type-III domains follow at residues 287 to 382, 385 to 483, 484 to 590, and 597 to 677; these read PIAP…CAEP, APKG…TDED, VPGG…SAPT, and PSPL…TEAK. N-linked (GlcNAc...) asparagine glycosylation is present at Asn-409. N-linked (GlcNAc...) asparagine glycosylation is present at Asn-684. The chain crosses the membrane as a helical span at residues 749–769; the sequence is GICAGGLVVLIILLGAIIVVI. Residues 770-1434 lie on the Cytoplasmic side of the membrane; the sequence is RKGKPVNMTK…LEYLESLETR (665 aa). Over residues 824–839 the composition is skewed to polar residues; it reads RGDQRSSVVNESSSLL. Positions 824–851 are disordered; it reads RGDQRSSVVNESSSLLGGSPRRQCGRKG. 2 Tyrosine-protein phosphatase domains span residues 876–1132 and 1164–1427; these read KTAE…ILEA and LREE…ALEY. Substrate-binding positions include Glu-1041, 1073–1079, and Gln-1117; that span reads CSAGTGR. Cys-1073 functions as the Phosphocysteine intermediate in the catalytic mechanism. Cys-1368 functions as the Phosphocysteine intermediate in the catalytic mechanism.

It belongs to the protein-tyrosine phosphatase family. Receptor class 2B subfamily.

The protein resides in the cell junction. The protein localises to the cell membrane. The catalysed reaction is O-phospho-L-tyrosyl-[protein] + H2O = L-tyrosyl-[protein] + phosphate. Functionally, tyrosine-protein phosphatase which dephosphorylates CTNNB1. May function in cell proliferation and migration and play a role in the maintenance of epithelial integrity. The protein is Receptor-type tyrosine-protein phosphatase U (PTPRU) of Gallus gallus (Chicken).